Here is a 439-residue protein sequence, read N- to C-terminus: Cysteine desulfurase-like protein ustD (439 aa).

Residues 1–25 (MKSVATSSLDDVDKDSVPLGSSING) form a disordered region. Residues 120–121 (TT), Asn-206, and 255–257 (SWY) contribute to the pyridoxal 5'-phosphate site. Residue Lys-258 is modified to N6-(pyridoxal phosphate)lysine.

Belongs to the class-V pyridoxal-phosphate-dependent aminotransferase family. Pyridoxal 5'-phosphate is required as a cofactor.

It participates in mycotoxin biosynthesis. Cysteine desulfurase-like protein; part of the gene cluster that mediates the biosynthesis of the secondary metabolite ustiloxin B, an antimitotic tetrapeptide. First, ustA is processed by the subtilisin-like endoprotease Kex2 that is outside the ustiloxin B gene cluster, at the C-terminal side of Arg-Lys, after transfer to Golgi apparatus through the endoplasmic reticulum (ER). Cleavage by KEX2 generates 16 peptides YAIG-I to YAIG-XVI. To process the precursor peptide further, at least two peptidases are necessary to cleave the N-terminal and C-terminal sides of the Tyr-Ala-Ile-Gly core peptide which serves as backbone for the synthesis of ustiloxin B, through cyclization and modification of the tyrosine with a non-protein coding amino acid, norvaline. One of the two peptidases must be the serine peptidase ustP; and the other pepdidase is probably ustH. Macrocyclization of the core peptide derived from ustA requires the tyrosinase ustQ, as well as the homologous oxidases ustYa and ustYb, and leads to the production of the first cyclization product N-desmethylustiloxin F. For the formation of N-desmethylustiloxin F, three oxidation steps are required, hydroxylation at the benzylic position, hydroxylation at either the aromatic ring of Tyr or beta-position of Ile, and oxidative cyclization. UstQ may catalyze the oxidation of a phenol moiety, whereas the ustYa and ustYb are most likely responsible for the remaining two-step oxidations. N-desmethylustiloxin F is then methylated by ustM to yield ustiloxin F which in turn substrate of the cytochrome P450 monooxygenase ustC which catalyzes the formation of S-deoxyustiloxin H. The flavoprotein monooxygenases ustF1 and ustF2 then participate in the modification of the side chain of S-deoxyustiloxin H, leading to the synthesis of an oxime intermediate, via ustiloxin H. Finally, carboxylative dehydration performed by the cysteine desulfurase-like protein ustD yields ustiloxin B. This chain is Cysteine desulfurase-like protein ustD, found in Aspergillus flavus (strain ATCC 200026 / FGSC A1120 / IAM 13836 / NRRL 3357 / JCM 12722 / SRRC 167).